Consider the following 350-residue polypeptide: Flagellar filament outer layer protein (350 aa).

The signal sequence occupies residues M1–A20.

As to quaternary structure, the flagellum consists of an outer layer composed of repeating units of FlaA around a core that contains several antigenically related polypeptides.

It is found in the periplasmic flagellum. Its subcellular location is the periplasm. In terms of biological role, component of the outer layer of the flagella. This chain is Flagellar filament outer layer protein (flaA), found in Treponema pallidum (strain Nichols).